The sequence spans 432 residues: ATP-dependent RNA helicase RhlB (432 aa).

The Q motif signature appears at 9 to 37 (QNFADLGLQPQVIDGLNAKGFIKCTPIQA). The 180-residue stretch at 40–219 (LPVLLAGQDI…FEHMQEPEHV (180 aa)) folds into the Helicase ATP-binding domain. 53–60 (AQTGTGKT) provides a ligand contact to ATP. A DEAD box motif is present at residues 165–168 (DEAD). In terms of domain architecture, Helicase C-terminal spans 245–390 (ALLQTLIEEE…QSDYDASALL (146 aa)). The interval 396-432 (PLRLQRRPQQNRRNNNGQRQGGNRKHTRPRQPRNTQS) is disordered. Residues 417–426 (GNRKHTRPRQ) are compositionally biased toward basic residues.

The protein belongs to the DEAD box helicase family. RhlB subfamily. As to quaternary structure, component of the RNA degradosome, which is a multiprotein complex involved in RNA processing and mRNA degradation.

It is found in the cytoplasm. It carries out the reaction ATP + H2O = ADP + phosphate + H(+). In terms of biological role, DEAD-box RNA helicase involved in RNA degradation. Has RNA-dependent ATPase activity and unwinds double-stranded RNA. In Aliivibrio fischeri (strain ATCC 700601 / ES114) (Vibrio fischeri), this protein is ATP-dependent RNA helicase RhlB.